We begin with the raw amino-acid sequence, 296 residues long: Protoheme IX farnesyltransferase (296 aa).

Over 1–9 the chain is Cytoplasmic; sequence MIFKQYLQV. A helical transmembrane segment spans residues 10 to 28; it reads TKPGIIFGNLISVIGGFLL. Residues 29–37 lie on the Periplasmic side of the membrane; the sequence is ASKGSIDYP. The helical transmembrane segment at 38–56 threads the bilayer; sequence LFIYTLVGVSLVVASGCVF. The Cytoplasmic segment spans residues 57–78; sequence NNYIDRDIDRKMERTKNRVLVK. The chain crosses the membrane as a helical span at residues 79–97; sequence GLISPAVSLVYATLLGIAG. Over 98–107 the chain is Periplasmic; that stretch reads FMLLWFGANP. A helical transmembrane segment spans residues 108–126; that stretch reads LACWLGVMGFVVYVGVYSL. The Cytoplasmic portion of the chain corresponds to 127–197; it reads YMKRHSVYGT…YQAANIPVLP (71 aa). Residues 198–216 traverse the membrane as a helical segment; the sequence is VVKGISVAKNHITLYIIAF. Residues 217-228 are Periplasmic-facing; that stretch reads AVATLMLSLGGY. The helical transmembrane segment at 229–247 threads the bilayer; sequence AGYKYLVVAAAVSVWWLGM. Topologically, residues 248 to 268 are cytoplasmic; it reads ALRGYKVADDRIWARKLFGFS. Residues 269–287 traverse the membrane as a helical segment; sequence IIAITALSVMMSVDFMVPD. Residues 288–296 lie on the Periplasmic side of the membrane; it reads SHTLLAAVW.

The protein belongs to the UbiA prenyltransferase family. Protoheme IX farnesyltransferase subfamily.

The protein localises to the cell inner membrane. It catalyses the reaction heme b + (2E,6E)-farnesyl diphosphate + H2O = Fe(II)-heme o + diphosphate. It functions in the pathway porphyrin-containing compound metabolism; heme O biosynthesis; heme O from protoheme: step 1/1. Converts heme B (protoheme IX) to heme O by substitution of the vinyl group on carbon 2 of heme B porphyrin ring with a hydroxyethyl farnesyl side group. The chain is Protoheme IX farnesyltransferase from Escherichia coli O1:K1 / APEC.